A 92-amino-acid chain; its full sequence is Small ribosomal subunit protein bS16 (92 aa).

The protein belongs to the bacterial ribosomal protein bS16 family.

This chain is Small ribosomal subunit protein bS16, found in Desulforudis audaxviator (strain MP104C).